Reading from the N-terminus, the 490-residue chain is Aspartyl/glutamyl-tRNA(Asn/Gln) amidotransferase subunit B (490 aa).

It belongs to the GatB/GatE family. GatB subfamily. Heterotrimer of A, B and C subunits.

It catalyses the reaction L-glutamyl-tRNA(Gln) + L-glutamine + ATP + H2O = L-glutaminyl-tRNA(Gln) + L-glutamate + ADP + phosphate + H(+). The enzyme catalyses L-aspartyl-tRNA(Asn) + L-glutamine + ATP + H2O = L-asparaginyl-tRNA(Asn) + L-glutamate + ADP + phosphate + 2 H(+). Its function is as follows. Allows the formation of correctly charged Asn-tRNA(Asn) or Gln-tRNA(Gln) through the transamidation of misacylated Asp-tRNA(Asn) or Glu-tRNA(Gln) in organisms which lack either or both of asparaginyl-tRNA or glutaminyl-tRNA synthetases. The reaction takes place in the presence of glutamine and ATP through an activated phospho-Asp-tRNA(Asn) or phospho-Glu-tRNA(Gln). This Burkholderia pseudomallei (strain K96243) protein is Aspartyl/glutamyl-tRNA(Asn/Gln) amidotransferase subunit B.